We begin with the raw amino-acid sequence, 659 residues long: DNA ligase (659 aa).

Residues 32 to 36 (DAEYD), 81 to 82 (SL), and E110 contribute to the NAD(+) site. Residue K112 is the N6-AMP-lysine intermediate of the active site. The NAD(+) site is built by R133, E168, K284, and K308. The Zn(2+) site is built by C402, C405, C420, and C425. The region spanning 582–659 (AKPQIFAGKS…SEEEFAELLP (78 aa)) is the BRCT domain.

It belongs to the NAD-dependent DNA ligase family. LigA subfamily. Mg(2+) is required as a cofactor. Requires Mn(2+) as cofactor.

It carries out the reaction NAD(+) + (deoxyribonucleotide)n-3'-hydroxyl + 5'-phospho-(deoxyribonucleotide)m = (deoxyribonucleotide)n+m + AMP + beta-nicotinamide D-nucleotide.. DNA ligase that catalyzes the formation of phosphodiester linkages between 5'-phosphoryl and 3'-hydroxyl groups in double-stranded DNA using NAD as a coenzyme and as the energy source for the reaction. It is essential for DNA replication and repair of damaged DNA. The polypeptide is DNA ligase (Desulfitobacterium hafniense (strain Y51)).